A 242-amino-acid polypeptide reads, in one-letter code: Aspartate/glutamate leucyltransferase (242 aa).

Belongs to the R-transferase family. Bpt subfamily.

The protein localises to the cytoplasm. The enzyme catalyses N-terminal L-glutamyl-[protein] + L-leucyl-tRNA(Leu) = N-terminal L-leucyl-L-glutamyl-[protein] + tRNA(Leu) + H(+). It carries out the reaction N-terminal L-aspartyl-[protein] + L-leucyl-tRNA(Leu) = N-terminal L-leucyl-L-aspartyl-[protein] + tRNA(Leu) + H(+). Its function is as follows. Functions in the N-end rule pathway of protein degradation where it conjugates Leu from its aminoacyl-tRNA to the N-termini of proteins containing an N-terminal aspartate or glutamate. This chain is Aspartate/glutamate leucyltransferase, found in Chromobacterium violaceum (strain ATCC 12472 / DSM 30191 / JCM 1249 / CCUG 213 / NBRC 12614 / NCIMB 9131 / NCTC 9757 / MK).